A 460-amino-acid polypeptide reads, in one-letter code: DL-alanine permease SerP2 (460 aa).

The next 12 helical transmembrane spans lie at leucine 26–histidine 46, leucine 47–leucine 67, phenylalanine 98–isoleucine 118, phenylalanine 124–leucine 144, phenylalanine 160–phenylalanine 180, phenylalanine 209–threonine 229, glutamine 246–tyrosine 266, phenylalanine 278–valine 298, alanine 344–isoleucine 364, phenylalanine 368–isoleucine 388, histidine 410–phenylalanine 430, and threonine 433–phenylalanine 453.

It belongs to the amino acid-polyamine-organocation (APC) superfamily. Amino acid transporter (AAT) (TC 2.A.3.1) family.

It localises to the cell membrane. Functionally, transports DL-alanine, DL-serine and glycine. The preferred substrate is DL-alanine. L-serine is a low-affinity substrate. The chain is DL-alanine permease SerP2 from Lactococcus lactis subsp. cremoris (strain MG1363).